The sequence spans 331 residues: 6-phosphogluconolactonase (331 aa).

Lys287 carries the N6-acetyllysine modification.

The protein belongs to the cycloisomerase 2 family.

The catalysed reaction is 6-phospho-D-glucono-1,5-lactone + H2O = 6-phospho-D-gluconate + H(+). The protein operates within carbohydrate degradation; pentose phosphate pathway; D-ribulose 5-phosphate from D-glucose 6-phosphate (oxidative stage): step 2/3. Catalyzes the hydrolysis of 6-phosphogluconolactone to 6-phosphogluconate. This is 6-phosphogluconolactonase from Escherichia coli O6:K15:H31 (strain 536 / UPEC).